The following is a 313-amino-acid chain: Homoserine O-acetyltransferase (313 aa).

The active-site Acyl-thioester intermediate is C144. Residues K165 and S194 each coordinate substrate. The Proton acceptor role is filled by H236. E238 is an active-site residue. R250 provides a ligand contact to substrate.

This sequence belongs to the MetA family.

The protein localises to the cytoplasm. The enzyme catalyses L-homoserine + acetyl-CoA = O-acetyl-L-homoserine + CoA. It functions in the pathway amino-acid biosynthesis; L-methionine biosynthesis via de novo pathway; O-acetyl-L-homoserine from L-homoserine: step 1/1. Transfers an acetyl group from acetyl-CoA to L-homoserine, forming acetyl-L-homoserine. The polypeptide is Homoserine O-acetyltransferase (Jannaschia sp. (strain CCS1)).